The sequence spans 110 residues: Large ribosomal subunit protein uL22 (110 aa).

It belongs to the universal ribosomal protein uL22 family. Part of the 50S ribosomal subunit.

Its function is as follows. This protein binds specifically to 23S rRNA; its binding is stimulated by other ribosomal proteins, e.g. L4, L17, and L20. It is important during the early stages of 50S assembly. It makes multiple contacts with different domains of the 23S rRNA in the assembled 50S subunit and ribosome. Functionally, the globular domain of the protein is located near the polypeptide exit tunnel on the outside of the subunit, while an extended beta-hairpin is found that lines the wall of the exit tunnel in the center of the 70S ribosome. This is Large ribosomal subunit protein uL22 from Desulfotalea psychrophila (strain LSv54 / DSM 12343).